Here is a 484-residue protein sequence, read N- to C-terminus: Glutamyl-tRNA(Gln) amidotransferase subunit A (484 aa).

Catalysis depends on charge relay system residues Lys-76 and Ser-151. Ser-175 functions as the Acyl-ester intermediate in the catalytic mechanism.

It belongs to the amidase family. GatA subfamily. As to quaternary structure, heterotrimer of A, B and C subunits.

It carries out the reaction L-glutamyl-tRNA(Gln) + L-glutamine + ATP + H2O = L-glutaminyl-tRNA(Gln) + L-glutamate + ADP + phosphate + H(+). In terms of biological role, allows the formation of correctly charged Gln-tRNA(Gln) through the transamidation of misacylated Glu-tRNA(Gln) in organisms which lack glutaminyl-tRNA synthetase. The reaction takes place in the presence of glutamine and ATP through an activated gamma-phospho-Glu-tRNA(Gln). This chain is Glutamyl-tRNA(Gln) amidotransferase subunit A, found in Hahella chejuensis (strain KCTC 2396).